Consider the following 157-residue polypeptide: Crossover junction endodeoxyribonuclease RuvC (157 aa).

Catalysis depends on residues Asp-7, Glu-67, and Asp-140. Positions 7, 67, and 140 each coordinate Mg(2+).

Belongs to the RuvC family. In terms of assembly, homodimer which binds Holliday junction (HJ) DNA. The HJ becomes 2-fold symmetrical on binding to RuvC with unstacked arms; it has a different conformation from HJ DNA in complex with RuvA. In the full resolvosome a probable DNA-RuvA(4)-RuvB(12)-RuvC(2) complex forms which resolves the HJ. The cofactor is Mg(2+).

It is found in the cytoplasm. The enzyme catalyses Endonucleolytic cleavage at a junction such as a reciprocal single-stranded crossover between two homologous DNA duplexes (Holliday junction).. In terms of biological role, the RuvA-RuvB-RuvC complex processes Holliday junction (HJ) DNA during genetic recombination and DNA repair. Endonuclease that resolves HJ intermediates. Cleaves cruciform DNA by making single-stranded nicks across the HJ at symmetrical positions within the homologous arms, yielding a 5'-phosphate and a 3'-hydroxyl group; requires a central core of homology in the junction. The consensus cleavage sequence is 5'-(A/T)TT(C/G)-3'. Cleavage occurs on the 3'-side of the TT dinucleotide at the point of strand exchange. HJ branch migration catalyzed by RuvA-RuvB allows RuvC to scan DNA until it finds its consensus sequence, where it cleaves and resolves the cruciform DNA. The chain is Crossover junction endodeoxyribonuclease RuvC from Rickettsia prowazekii (strain Madrid E).